The sequence spans 426 residues: Putative FBD-associated F-box protein At5g53635 (426 aa).

The F-box domain occupies 1 to 45 (MISQLPDPLICHILSHLPIKDLVTTRVLSTRWRSLWLWLPCLELN). Positions 353-405 (MIQFGSSLVPECLLSSLEFVDIRIPFRGHLEVMKLVRYFLENSAILKKLSLDH) constitute an FBD domain.

In Arabidopsis thaliana (Mouse-ear cress), this protein is Putative FBD-associated F-box protein At5g53635.